Reading from the N-terminus, the 493-residue chain is Ectonucleotide pyrophosphatase/phosphodiesterase 2 (493 aa).

Topologically, residues 1–28 are cytoplasmic; it reads MLLFEQPVDLEKNNEDDTNIKPFAISRH. Residues 29–45 traverse the membrane as a helical; Signal-anchor for type II membrane protein segment; sequence FLLKLLLCGIILIELLL. Over 46 to 493 the chain is Extracellular; sequence YSKCPKPIDN…KTKKEKSLLQ (448 aa). N-linked (GlcNAc...) asparagine glycans are attached at residues N62, N69, and N112. The segment at 76-438 is phosphodiesterase; that stretch reads TLTILISIDG…IGIMGTHGYN (363 aa). Residue T127 is the Nucleophile of the active site. Residues N153 and N441 are each glycosylated (N-linked (GlcNAc...) asparagine).

This sequence belongs to the nucleotide pyrophosphatase/phosphodiesterase family. Autophosphorylated as part of the catalytic cycle of phosphodiesterase/pyrophosphatase activity.

It localises to the membrane. The catalysed reaction is Hydrolytically removes 5'-nucleotides successively from the 3'-hydroxy termini of 3'-hydroxy-terminated oligonucleotides.. The enzyme catalyses a ribonucleoside 5'-triphosphate + H2O = a ribonucleoside 5'-phosphate + diphosphate + H(+). It catalyses the reaction a 2'-deoxyribonucleoside 5'-triphosphate + H2O = a 2'-deoxyribonucleoside 5'-phosphate + diphosphate + H(+). Functionally, mediates extracellular nucleotide derived phosphate hydrolysis along with NPP1 and PHO5. The polypeptide is Ectonucleotide pyrophosphatase/phosphodiesterase 2 (NPP2) (Saccharomyces cerevisiae (strain ATCC 204508 / S288c) (Baker's yeast)).